The primary structure comprises 256 residues: ATP synthase peripheral stalk subunit b, mitochondrial (256 aa).

Residues 1-42 constitute a mitochondrion transit peptide; sequence MLSRVVLSAAATAAPCLKNAAVLGPGVLQATRVFHTGQPRLA. An N6-succinyllysine modification is found at Lys-131. Residues Lys-139, Lys-154, Lys-162, Lys-221, Lys-233, and Lys-244 each carry the N6-acetyllysine modification.

The protein belongs to the eukaryotic ATPase B chain family. Component of the ATP synthase complex composed at least of ATP5F1A/subunit alpha, ATP5F1B/subunit beta, ATP5MC1/subunit c (homooctomer), MT-ATP6/subunit a, MT-ATP8/subunit 8, ATP5ME/subunit e, ATP5MF/subunit f, ATP5MG/subunit g, ATP5MK/subunit k, ATP5MJ/subunit j, ATP5F1C/subunit gamma, ATP5F1D/subunit delta, ATP5F1E/subunit epsilon, ATP5PF/subunit F6, ATP5PB/subunit b, ATP5PD/subunit d, ATP5PO/subunit OSCP. ATP synthase complex consists of a soluble F(1) head domain (subunits alpha(3) and beta(3)) - the catalytic core - and a membrane F(0) domain - the membrane proton channel (subunits c, a, 8, e, f, g, k and j). These two domains are linked by a central stalk (subunits gamma, delta, and epsilon) rotating inside the F1 region and a stationary peripheral stalk (subunits F6, b, d, and OSCP).

It is found in the mitochondrion. The protein localises to the mitochondrion inner membrane. Functionally, subunit b, of the mitochondrial membrane ATP synthase complex (F(1)F(0) ATP synthase or Complex V) that produces ATP from ADP in the presence of a proton gradient across the membrane which is generated by electron transport complexes of the respiratory chain. ATP synthase complex consist of a soluble F(1) head domain - the catalytic core - and a membrane F(1) domain - the membrane proton channel. These two domains are linked by a central stalk rotating inside the F(1) region and a stationary peripheral stalk. During catalysis, ATP synthesis in the catalytic domain of F(1) is coupled via a rotary mechanism of the central stalk subunits to proton translocation. In vivo, can only synthesize ATP although its ATP hydrolase activity can be activated artificially in vitro. Part of the complex F(0) domain. Part of the complex F(0) domain and the peripheric stalk, which acts as a stator to hold the catalytic alpha(3)beta(3) subcomplex and subunit a/ATP6 static relative to the rotary elements. The polypeptide is ATP synthase peripheral stalk subunit b, mitochondrial (Rattus norvegicus (Rat)).